The primary structure comprises 209 residues: Chloramphenicol acetyltransferase (209 aa).

Histidine 189 (proton acceptor) is an active-site residue.

Belongs to the chloramphenicol acetyltransferase family. In terms of assembly, homotrimer.

The enzyme catalyses chloramphenicol + acetyl-CoA = chloramphenicol 3-acetate + CoA. In terms of biological role, this enzyme is an effector of chloramphenicol resistance in bacteria. The polypeptide is Chloramphenicol acetyltransferase (Staphylococcus aureus).